The sequence spans 323 residues: Transposase for insertion sequence element IS6120 (323 aa).

Positions 300-323 (ERPTDITPPTSPSDGGQHAGTEVA) are disordered. Low complexity predominate over residues 304-313 (DITPPTSPSD).

It belongs to the transposase mutator family.

Its function is as follows. Required for the transposition of the insertion element. This is Transposase for insertion sequence element IS6120 from Mycolicibacterium smegmatis (Mycobacterium smegmatis).